Consider the following 415-residue polypeptide: Serine hydroxymethyltransferase (415 aa).

Residues Leu117 and 121 to 123 each bind (6S)-5,6,7,8-tetrahydrofolate; that span reads GHL. Position 226 is an N6-(pyridoxal phosphate)lysine (Lys226). Residues Glu241 and 349–351 each bind (6S)-5,6,7,8-tetrahydrofolate; that span reads SPF.

It belongs to the SHMT family. In terms of assembly, homodimer. The cofactor is pyridoxal 5'-phosphate.

It is found in the cytoplasm. It catalyses the reaction (6R)-5,10-methylene-5,6,7,8-tetrahydrofolate + glycine + H2O = (6S)-5,6,7,8-tetrahydrofolate + L-serine. Its pathway is one-carbon metabolism; tetrahydrofolate interconversion. It participates in amino-acid biosynthesis; glycine biosynthesis; glycine from L-serine: step 1/1. Functionally, catalyzes the reversible interconversion of serine and glycine with tetrahydrofolate (THF) serving as the one-carbon carrier. This reaction serves as the major source of one-carbon groups required for the biosynthesis of purines, thymidylate, methionine, and other important biomolecules. Also exhibits THF-independent aldolase activity toward beta-hydroxyamino acids, producing glycine and aldehydes, via a retro-aldol mechanism. This chain is Serine hydroxymethyltransferase, found in Geobacter metallireducens (strain ATCC 53774 / DSM 7210 / GS-15).